Consider the following 95-residue polypeptide: UPF0235 protein Ssed_1229 (95 aa).

It belongs to the UPF0235 family.

The polypeptide is UPF0235 protein Ssed_1229 (Shewanella sediminis (strain HAW-EB3)).